The following is a 526-amino-acid chain: Peptide chain release factor 3 (526 aa).

The 270-residue stretch at 8-277 folds into the tr-type G domain; that stretch reads NKRRTFAIIS…GLTQWAPAPQ (270 aa). Residues 17–24, 85–89, and 139–142 contribute to the GTP site; these read SHPDAGKT, DTPGH, and NKLD.

Belongs to the TRAFAC class translation factor GTPase superfamily. Classic translation factor GTPase family. PrfC subfamily.

It localises to the cytoplasm. In terms of biological role, increases the formation of ribosomal termination complexes and stimulates activities of RF-1 and RF-2. It binds guanine nucleotides and has strong preference for UGA stop codons. It may interact directly with the ribosome. The stimulation of RF-1 and RF-2 is significantly reduced by GTP and GDP, but not by GMP. This chain is Peptide chain release factor 3, found in Histophilus somni (strain 129Pt) (Haemophilus somnus).